We begin with the raw amino-acid sequence, 209 residues long: Probable GTP-binding protein EngB (209 aa).

The region spanning 22 to 198 (TPLEIAFVGR…NRTVGSWLDA (177 aa)) is the EngB-type G domain. Positions 37 and 59 each coordinate Mg(2+).

Belongs to the TRAFAC class TrmE-Era-EngA-EngB-Septin-like GTPase superfamily. EngB GTPase family. Mg(2+) serves as cofactor.

Its function is as follows. Necessary for normal cell division and for the maintenance of normal septation. This Neisseria meningitidis serogroup B (strain ATCC BAA-335 / MC58) protein is Probable GTP-binding protein EngB.